A 277-amino-acid chain; its full sequence is MVELCGGEGEGQIMLATELAQLRAMARELEAKMDPDRVAARELCRALASSVDRSIRLAASCFPPPEHPPPAAGNAGRDAAFKKRKGMAKVRRQVRVTSVQDTASLDDGLSWRKYGQKDILGAKYPRAYFRCTHRHTQGCNATKQVQRADGDPLLFDVVYLGDHTCGQAAVAAAAQSAPPEHAGQEQQRQSSLLAAGTEGIHQQVVAEPMAAPFLFTSTAAGGVDDGYFSFISPANSDCQFSSDFSAGSVGVDMDHEARFEDLFSSTLEFFQSEIQNL.

Residues 100 to 168 (QDTASLDDGL…YLGDHTCGQA (69 aa)) constitute a DNA-binding region (WRKY).

This sequence belongs to the WRKY group III family.

The protein localises to the nucleus. Its function is as follows. May play a role in defense responses. In Oryza sativa subsp. japonica (Rice), this protein is Transcription factor WRKY19.